The sequence spans 365 residues: tRNA/tmRNA (uracil-C(5))-methyltransferase (365 aa).

The S-adenosyl-L-methionine site is built by glutamine 189, tyrosine 217, asparagine 222, glutamate 238, and aspartate 298. The active-site Nucleophile is the cysteine 323. The Proton acceptor role is filled by glutamate 357.

Belongs to the class I-like SAM-binding methyltransferase superfamily. RNA M5U methyltransferase family. TrmA subfamily.

The enzyme catalyses uridine(54) in tRNA + S-adenosyl-L-methionine = 5-methyluridine(54) in tRNA + S-adenosyl-L-homocysteine + H(+). The catalysed reaction is uridine(341) in tmRNA + S-adenosyl-L-methionine = 5-methyluridine(341) in tmRNA + S-adenosyl-L-homocysteine + H(+). In terms of biological role, dual-specificity methyltransferase that catalyzes the formation of 5-methyluridine at position 54 (m5U54) in all tRNAs, and that of position 341 (m5U341) in tmRNA (transfer-mRNA). The sequence is that of tRNA/tmRNA (uracil-C(5))-methyltransferase from Shewanella sp. (strain ANA-3).